Here is a 446-residue protein sequence, read N- to C-terminus: Tubulin beta chain (446 aa).

8 residues coordinate GTP: Gln11, Glu69, Ser138, Gly142, Thr143, Gly144, Asn204, and Asn226. Glu69 contributes to the Mg(2+) binding site. The disordered stretch occupies residues 423-446; the sequence is QQYQDAGVDEEEEEYEEEPLPEDE. Over residues 429–446 the composition is skewed to acidic residues; the sequence is GVDEEEEEYEEEPLPEDE.

This sequence belongs to the tubulin family. Dimer of alpha and beta chains. A typical microtubule is a hollow water-filled tube with an outer diameter of 25 nm and an inner diameter of 15 nM. Alpha-beta heterodimers associate head-to-tail to form protofilaments running lengthwise along the microtubule wall with the beta-tubulin subunit facing the microtubule plus end conferring a structural polarity. Microtubules usually have 13 protofilaments but different protofilament numbers can be found in some organisms and specialized cells. Requires Mg(2+) as cofactor.

Its subcellular location is the cytoplasm. It is found in the cytoskeleton. Functionally, tubulin is the major constituent of microtubules, a cylinder consisting of laterally associated linear protofilaments composed of alpha- and beta-tubulin heterodimers. Microtubules grow by the addition of GTP-tubulin dimers to the microtubule end, where a stabilizing cap forms. Below the cap, tubulin dimers are in GDP-bound state, owing to GTPase activity of alpha-tubulin. The polypeptide is Tubulin beta chain (TUBB) (Pestalotiopsis microspora).